The primary structure comprises 524 residues: MDQEKVIVIDFGGQYNQLVARRVRECNVYCEIYSYKIDIEKIKEMNPKGIILTGGPNSCYEENSPSYRKELFELGIPVLGICYGAQLMMHKLGGKVITPEVGEYGKTEITYSANGVMFKDLPSESVCWMSHFDRIAEAAPGFEVVAHTADCPIAATQNVEKKLYAVQFHPEVLHTKNGTQMIYNFVRGVCGCAGTWKMDSFVKNTIDEIREQVGDGKVLLALSGGVDSSVLAALLAKAIGKQLTCVFVDHGLLRKNEGDEVEGVFGKDGSFDINFVRVNAQERYYSKLAGVTEPERKRKIIGEEFIRVFEEEAKKIGKVDFLAQGTIYPDVVESGLGGESAVIKSHHNVGGLPEHVDFKDIVEPLRNLFKDEVRKVGLELGLPDYLVFRQPFPGPGLGIRIIGEVTAEKVRIVQDADWIYRSEVEKAAKEYKEAHGEEPSWMPNQYFAALTNMRSVGVMGDERTYDYAVAVRAVRTVDFMTAEAAEIPFEVLQTVMSRIINEVKGVNRVFYDLTSKPPGTIEFE.

A Glutamine amidotransferase type-1 domain is found at 5 to 195 (KVIVIDFGGQ…VRGVCGCAGT (191 aa)). Residue C82 is the Nucleophile of the active site. Active-site residues include H169 and E171. One can recognise a GMPS ATP-PPase domain in the interval 196–389 (WKMDSFVKNT…LGLPDYLVFR (194 aa)). Residue 223-229 (SGGVDSS) participates in ATP binding.

Homodimer.

It catalyses the reaction XMP + L-glutamine + ATP + H2O = GMP + L-glutamate + AMP + diphosphate + 2 H(+). Its pathway is purine metabolism; GMP biosynthesis; GMP from XMP (L-Gln route): step 1/1. In terms of biological role, catalyzes the synthesis of GMP from XMP. The polypeptide is GMP synthase [glutamine-hydrolyzing] (Agathobacter rectalis (strain ATCC 33656 / DSM 3377 / JCM 17463 / KCTC 5835 / VPI 0990) (Eubacterium rectale)).